Here is a 408-residue protein sequence, read N- to C-terminus: MVKVNENYLKLKAGYLFPEISKRVNNYTQANSSSKVIKLGIGDVTEPLPKACVKAMGEALNEMGTNNGFKGYGPEQGYGWLREKISVNDFISRGCQISSEEIFVSDGSKCDSSNILDILGSDNLIAVTDPVYPVYVDTNVMTGRTGETLQNGTYQGLVYLAINEENKFQPEIPKKKVDIVYLCFPNNPTGATITKQELKKWVDYAIENKSLILFDAAYEAFIQDKNIPHSIYEIEGAKNCAIEFRSFSKNAGFTGVRCAYTVIPKNLSGQNSKGDKIDLWSLWNRRQCTKFNGVSYIVQRGAEAVYSSQGKKEVNSLIDFYMKNAEIMQNKLRSAGFKVYGGDNAPYVWIKVPDRMTSWDFFDYLLEKADVVGTPGSGFGLAGEGYFRLSAFNSRMNVNNAMERIINI.

Residues tyrosine 15 and glycine 42 each coordinate substrate. Pyridoxal 5'-phosphate-binding positions include tyrosine 72, 108 to 109 (SK), tyrosine 132, asparagine 187, tyrosine 218, and 246 to 248 (SFS). The substrate site is built by lysine 109, tyrosine 132, and asparagine 187. Lysine 249 is subject to N6-(pyridoxal phosphate)lysine. Pyridoxal 5'-phosphate is bound by residues arginine 257 and asparagine 292. Asparagine 292 and arginine 388 together coordinate substrate.

Belongs to the class-I pyridoxal-phosphate-dependent aminotransferase family. LL-diaminopimelate aminotransferase subfamily. Homodimer. It depends on pyridoxal 5'-phosphate as a cofactor.

The enzyme catalyses (2S,6S)-2,6-diaminopimelate + 2-oxoglutarate = (S)-2,3,4,5-tetrahydrodipicolinate + L-glutamate + H2O + H(+). Its pathway is amino-acid biosynthesis; L-lysine biosynthesis via DAP pathway; LL-2,6-diaminopimelate from (S)-tetrahydrodipicolinate (aminotransferase route): step 1/1. Involved in the synthesis of meso-diaminopimelate (m-DAP or DL-DAP), required for both lysine and peptidoglycan biosynthesis. Catalyzes the direct conversion of tetrahydrodipicolinate to LL-diaminopimelate. This chain is LL-diaminopimelate aminotransferase, found in Prochlorococcus marinus subsp. pastoris (strain CCMP1986 / NIES-2087 / MED4).